A 331-amino-acid chain; its full sequence is Biotin synthase (331 aa).

In terms of domain architecture, Radical SAM core spans 46 to 275; that stretch reads YYGKKVKLNM…TKEIRISGGR (230 aa). Residues cysteine 64, cysteine 68, and cysteine 71 each coordinate [4Fe-4S] cluster. The [2Fe-2S] cluster site is built by cysteine 108, cysteine 140, cysteine 200, and arginine 270.

It belongs to the radical SAM superfamily. Biotin synthase family. In terms of assembly, homodimer. [4Fe-4S] cluster is required as a cofactor. [2Fe-2S] cluster serves as cofactor.

The enzyme catalyses (4R,5S)-dethiobiotin + (sulfur carrier)-SH + 2 reduced [2Fe-2S]-[ferredoxin] + 2 S-adenosyl-L-methionine = (sulfur carrier)-H + biotin + 2 5'-deoxyadenosine + 2 L-methionine + 2 oxidized [2Fe-2S]-[ferredoxin]. Its pathway is cofactor biosynthesis; biotin biosynthesis; biotin from 7,8-diaminononanoate: step 2/2. Its function is as follows. Catalyzes the conversion of dethiobiotin (DTB) to biotin by the insertion of a sulfur atom into dethiobiotin via a radical-based mechanism. The protein is Biotin synthase of Lysinibacillus sphaericus (strain C3-41).